We begin with the raw amino-acid sequence, 203 residues long: Endo-type membrane-bound lytic murein transglycosylase A (203 aa).

The N-terminal stretch at 1–15 (MKLRWFAFLVVLLAG) is a signal peptide. C16 carries N-palmitoyl cysteine lipidation. C16 is lipidated: S-diacylglycerol cysteine.

This sequence belongs to the transglycosylase Slt family.

It is found in the cell outer membrane. The catalysed reaction is Endolytic cleavage of the (1-&gt;4)-beta-glycosidic linkage between N-acetylmuramic acid (MurNAc) and N-acetylglucosamine (GlcNAc) residues in peptidoglycan with concomitant formation of a 1,6-anhydrobond in the MurNAc residue.. In terms of biological role, murein-degrading enzyme. May play a role in recycling of muropeptides during cell elongation and/or cell division. Preferentially cleaves at a distance of more than two disaccharide units from the ends of the glycan chain. This is Endo-type membrane-bound lytic murein transglycosylase A from Escherichia fergusonii (strain ATCC 35469 / DSM 13698 / CCUG 18766 / IAM 14443 / JCM 21226 / LMG 7866 / NBRC 102419 / NCTC 12128 / CDC 0568-73).